The primary structure comprises 98 residues: Keratin, high sulfur matrix protein, IIIB3 (98 aa).

The residue at position 1 (alanine 1) is an N-acetylalanine.

The protein belongs to the KRTAP type 3 family. In terms of assembly, interacts with wool keratins. Wool.

In the wool cortex, wool keratin intermediate filaments are embedded in an interfilamentous matrix, consisting of hair keratin-associated proteins (KRTAP), which are essential for the formation of a rigid and resistant wool shaft through their extensive disulfide bond cross-linking with abundant cysteine residues of wool keratins. The matrix proteins include the high-sulfur and high-glycine-tyrosine keratins. This chain is Keratin, high sulfur matrix protein, IIIB3, found in Ovis aries (Sheep).